The chain runs to 815 residues: Bifunctional aspartokinase/homoserine dehydrogenase (815 aa).

An aspartokinase region spans residues 1-249; the sequence is MRVLKFGGTS…VPDARLLPTL (249 aa). The interval 250–470 is interface; it reads SYREAMELSY…NNKKVVDMFL (221 aa). ACT domains are found at residues 320 to 392 and 401 to 478; these read VSGP…PIEV and VVGD…GVGG. Residues 471–815 form a homoserine dehydrogenase region; the sequence is VGVGGVGGEL…FADILRTLQH (345 aa). Residues V473, G475, V476, A504, and T555 each coordinate NAD(+). NADP(+) is bound at residue V476. NADPH is bound at residue V476. Position 555 (T555) interacts with NADP(+). NADPH contacts are provided by T555, S556, and K579. K579 contributes to the NADP(+) binding site. Residues E606, V609, A611, and L613 each coordinate Na(+). NADP(+) contacts are provided by G664 and E667. Residues E667 and D678 each contribute to the L-homoserine site. K682 functions as the Proton donor in the catalytic mechanism. NAD(+) is bound at residue G797. NADP(+) is bound at residue G797. Position 797 (G797) interacts with NADPH.

This sequence in the N-terminal section; belongs to the aspartokinase family. The protein in the C-terminal section; belongs to the homoserine dehydrogenase family. Homotetramer. A metal cation serves as cofactor.

It catalyses the reaction L-homoserine + NADP(+) = L-aspartate 4-semialdehyde + NADPH + H(+). The catalysed reaction is L-homoserine + NAD(+) = L-aspartate 4-semialdehyde + NADH + H(+). The enzyme catalyses L-aspartate + ATP = 4-phospho-L-aspartate + ADP. It participates in amino-acid biosynthesis; L-lysine biosynthesis via DAP pathway; (S)-tetrahydrodipicolinate from L-aspartate: step 1/4. Its pathway is amino-acid biosynthesis; L-methionine biosynthesis via de novo pathway; L-homoserine from L-aspartate: step 1/3. The protein operates within amino-acid biosynthesis; L-methionine biosynthesis via de novo pathway; L-homoserine from L-aspartate: step 3/3. It functions in the pathway amino-acid biosynthesis; L-threonine biosynthesis; L-threonine from L-aspartate: step 1/5. It participates in amino-acid biosynthesis; L-threonine biosynthesis; L-threonine from L-aspartate: step 3/5. In terms of biological role, bifunctional aspartate kinase and homoserine dehydrogenase that catalyzes the first and the third steps toward the synthesis of lysine, methionine and threonine from aspartate. This Haemophilus influenzae (strain ATCC 51907 / DSM 11121 / KW20 / Rd) protein is Bifunctional aspartokinase/homoserine dehydrogenase (thrA).